Consider the following 125-residue polypeptide: Large ribosomal subunit protein bL12 (125 aa).

The protein belongs to the bacterial ribosomal protein bL12 family. In terms of assembly, homodimer. Part of the ribosomal stalk of the 50S ribosomal subunit. Forms a multimeric L10(L12)X complex, where L10 forms an elongated spine to which 2 to 4 L12 dimers bind in a sequential fashion. Binds GTP-bound translation factors.

Functionally, forms part of the ribosomal stalk which helps the ribosome interact with GTP-bound translation factors. Is thus essential for accurate translation. This Campylobacter jejuni subsp. jejuni serotype O:6 (strain 81116 / NCTC 11828) protein is Large ribosomal subunit protein bL12.